We begin with the raw amino-acid sequence, 559 residues long: Formate--tetrahydrofolate ligase (559 aa).

ATP is bound at residue 68 to 75 (TPAGEGKT).

It belongs to the formate--tetrahydrofolate ligase family.

The enzyme catalyses (6S)-5,6,7,8-tetrahydrofolate + formate + ATP = (6R)-10-formyltetrahydrofolate + ADP + phosphate. The protein operates within one-carbon metabolism; tetrahydrofolate interconversion. The polypeptide is Formate--tetrahydrofolate ligase (Rhizobium etli (strain ATCC 51251 / DSM 11541 / JCM 21823 / NBRC 15573 / CFN 42)).